The following is a 166-amino-acid chain: Protein SprT (166 aa).

The SprT-like domain occupies R19–A164. H78 contributes to the Zn(2+) binding site. Residue E79 is part of the active site. Position 82 (H82) interacts with Zn(2+).

It belongs to the SprT family. Zn(2+) is required as a cofactor.

Its subcellular location is the cytoplasm. The chain is Protein SprT from Cronobacter sakazakii (strain ATCC BAA-894) (Enterobacter sakazakii).